We begin with the raw amino-acid sequence, 177 residues long: Large ribosomal subunit protein uL6 (177 aa).

Belongs to the universal ribosomal protein uL6 family. As to quaternary structure, part of the 50S ribosomal subunit.

Functionally, this protein binds to the 23S rRNA, and is important in its secondary structure. It is located near the subunit interface in the base of the L7/L12 stalk, and near the tRNA binding site of the peptidyltransferase center. The protein is Large ribosomal subunit protein uL6 of Brucella canis (strain ATCC 23365 / NCTC 10854 / RM-666).